The primary structure comprises 294 residues: Pyridoxal 5'-phosphate synthase subunit PdxS (294 aa).

Aspartate 24 lines the D-ribose 5-phosphate pocket. Lysine 81 (schiff-base intermediate with D-ribose 5-phosphate) is an active-site residue. Glycine 153 is a D-ribose 5-phosphate binding site. Arginine 165 is a D-glyceraldehyde 3-phosphate binding site. Residues glycine 214 and 235–236 (GS) contribute to the D-ribose 5-phosphate site.

This sequence belongs to the PdxS/SNZ family. In terms of assembly, homohexamer and homododecamer. In the presence of PdxT, forms a dodecamer of heterodimers.

The catalysed reaction is aldehydo-D-ribose 5-phosphate + D-glyceraldehyde 3-phosphate + L-glutamine = pyridoxal 5'-phosphate + L-glutamate + phosphate + 3 H2O + H(+). It functions in the pathway cofactor biosynthesis; pyridoxal 5'-phosphate biosynthesis. Its function is as follows. Catalyzes the formation of pyridoxal 5'-phosphate from ribose 5-phosphate (RBP), glyceraldehyde 3-phosphate (G3P) and ammonia. The ammonia is provided by the PdxT subunit. Can also use ribulose 5-phosphate and dihydroxyacetone phosphate as substrates, resulting from enzyme-catalyzed isomerization of RBP and G3P, respectively. This is Pyridoxal 5'-phosphate synthase subunit PdxS from Bacillus subtilis (strain 168).